The sequence spans 64 residues: DNA gyrase inhibitor YacG (64 aa).

Residues Cys-9, Cys-12, Cys-28, and Cys-32 each contribute to the Zn(2+) site. Residues 45–64 (NAIAGAPDMSDSDGWSEDQY) form a disordered region. A compositionally biased stretch (acidic residues) spans 54 to 64 (SDSDGWSEDQY).

This sequence belongs to the DNA gyrase inhibitor YacG family. In terms of assembly, interacts with GyrB. Requires Zn(2+) as cofactor.

In terms of biological role, inhibits all the catalytic activities of DNA gyrase by preventing its interaction with DNA. Acts by binding directly to the C-terminal domain of GyrB, which probably disrupts DNA binding by the gyrase. This Vibrio parahaemolyticus serotype O3:K6 (strain RIMD 2210633) protein is DNA gyrase inhibitor YacG.